The sequence spans 467 residues: Transcription factor TGAL7 (467 aa).

Positions 1–10 (MGGSREEDRQ) are enriched in basic and acidic residues. Disordered regions lie at residues 1-42 (MGGS…KESS) and 105-184 (QLQV…KTLR). The segment covering 25-41 (SSSPTTMIASSSMSKES) has biased composition (low complexity). The segment covering 120 to 129 (QGGQKINSSV) has biased composition (polar residues). The segment covering 145–157 (KDNKNSSLIKKEG) has biased composition (basic and acidic residues). Residues 158–168 (SSSGKGATTSN) show a composition bias toward polar residues. Residues 169 to 182 (DPEREGRRTLDPKT) show a composition bias toward basic and acidic residues. The bZIP domain maps to 179–223 (DPKTLRRLAQNREAARKSRLRKKAYIQQLESSRIRLSQLEQQVHV). Residues 181–201 (KTLRRLAQNREAARKSRLRKK) are basic motif. The tract at residues 207-221 (LESSRIRLSQLEQQV) is leucine-zipper. One can recognise a DOG1 domain in the interval 247-458 (ASLFDLEYGR…RALSTLWVAR (212 aa)).

The protein belongs to the bZIP family. In terms of assembly, interacts with NPR5/NH4, NH5.1 and NH5.2.

The protein localises to the nucleus. Transcriptional regulator involved in defense response. The chain is Transcription factor TGAL7 from Oryza sativa subsp. japonica (Rice).